The sequence spans 35 residues: Photosystem II reaction center protein Psb30 (35 aa).

The helical transmembrane segment at 7-27 (LIANFGALALITLAGPAVIFI) threads the bilayer.

It belongs to the Psb30/Ycf12 family. In terms of assembly, PSII is composed of 1 copy each of membrane proteins PsbA, PsbB, PsbC, PsbD, PsbE, PsbF, PsbH, PsbI, PsbJ, PsbK, PsbL, PsbM, PsbT, PsbX, PsbY, PsbZ, Psb30/Ycf12, peripheral proteins PsbO, CyanoQ (PsbQ), PsbU, PsbV and a large number of cofactors. It forms dimeric complexes.

The protein localises to the cellular thylakoid membrane. A core subunit of photosystem II (PSII), probably helps stabilize the reaction center. The sequence is that of Photosystem II reaction center protein Psb30 from Synechococcus sp. (strain CC9311).